We begin with the raw amino-acid sequence, 470 residues long: ATP synthase subunit beta (470 aa).

Position 157 to 164 (157 to 164 (GGAGVGKT)) interacts with ATP.

This sequence belongs to the ATPase alpha/beta chains family. In terms of assembly, F-type ATPases have 2 components, CF(1) - the catalytic core - and CF(0) - the membrane proton channel. CF(1) has five subunits: alpha(3), beta(3), gamma(1), delta(1), epsilon(1). CF(0) has three main subunits: a(1), b(2) and c(9-12). The alpha and beta chains form an alternating ring which encloses part of the gamma chain. CF(1) is attached to CF(0) by a central stalk formed by the gamma and epsilon chains, while a peripheral stalk is formed by the delta and b chains.

The protein resides in the cell membrane. The catalysed reaction is ATP + H2O + 4 H(+)(in) = ADP + phosphate + 5 H(+)(out). In terms of biological role, produces ATP from ADP in the presence of a proton gradient across the membrane. The catalytic sites are hosted primarily by the beta subunits. The protein is ATP synthase subunit beta of Pelotomaculum thermopropionicum (strain DSM 13744 / JCM 10971 / SI).